Consider the following 110-residue polypeptide: Insulin (110 aa).

The N-terminal stretch at 1–24 (MAPWTRLLPLLALLSLWIPAPTRA) is a signal peptide. 3 disulfide bridges follow: cysteine 31/cysteine 96, cysteine 43/cysteine 109, and cysteine 95/cysteine 100. Residues 57-87 (EAEDLQGKDAELGEAPGAGGLQPSALEAPLQ) constitute a propeptide, c peptide. The interval 60-80 (DLQGKDAELGEAPGAGGLQPS) is disordered.

It belongs to the insulin family. As to quaternary structure, heterodimer of a B chain and an A chain linked by two disulfide bonds.

The protein localises to the secreted. Its function is as follows. Insulin decreases blood glucose concentration. It increases cell permeability to monosaccharides, amino acids and fatty acids. It accelerates glycolysis, the pentose phosphate cycle, and glycogen synthesis in liver. This is Insulin (INS) from Felis catus (Cat).